The sequence spans 358 residues: Phosphoserine aminotransferase (358 aa).

R41 contributes to the L-glutamate binding site. Residues 75 to 76 (AS), W100, T148, D167, and Q190 contribute to the pyridoxal 5'-phosphate site. At K191 the chain carries N6-(pyridoxal phosphate)lysine. 233 to 234 (NT) lines the pyridoxal 5'-phosphate pocket.

It belongs to the class-V pyridoxal-phosphate-dependent aminotransferase family. SerC subfamily. As to quaternary structure, homodimer. Pyridoxal 5'-phosphate is required as a cofactor.

Its subcellular location is the cytoplasm. The enzyme catalyses O-phospho-L-serine + 2-oxoglutarate = 3-phosphooxypyruvate + L-glutamate. It carries out the reaction 4-(phosphooxy)-L-threonine + 2-oxoglutarate = (R)-3-hydroxy-2-oxo-4-phosphooxybutanoate + L-glutamate. Its pathway is amino-acid biosynthesis; L-serine biosynthesis; L-serine from 3-phospho-D-glycerate: step 2/3. It functions in the pathway cofactor biosynthesis; pyridoxine 5'-phosphate biosynthesis; pyridoxine 5'-phosphate from D-erythrose 4-phosphate: step 3/5. Its function is as follows. Catalyzes the reversible conversion of 3-phosphohydroxypyruvate to phosphoserine and of 3-hydroxy-2-oxo-4-phosphonooxybutanoate to phosphohydroxythreonine. This chain is Phosphoserine aminotransferase, found in Campylobacter jejuni subsp. jejuni serotype O:2 (strain ATCC 700819 / NCTC 11168).